The sequence spans 388 residues: MAFQLTPLRVALVAGEPSGDLLGASLLGGLHARLPASSRYYGIGGPRMSAVEFDAHWPMEKLAVRGYVEALKHIPEILRIRGELKRQLLAEPPDAFVGIDAPDFNFGLEPALRGAGIPTIHFVCPSIWAWRGGRIKKIVKAVDHMLCLFPFEPELLEKAGVAATFVGHPLADEIPLEPDTHGARIALGLPGGGPVIAVLPGSRRSEIELIGPTFFDAMELMQQREPGVRFVVPAATPALRALLQPLVDAHPSLSVTLTEGRAQVAMTAADAILVKSGTVTLEAALLKKPMVISYKVPWLTGQIMRRQGYLPYVGLPNILAGRFVVPELLQHFATPDALADATLTQLRDDANRRALTDIFTDMHLALRQNTAQRAAEAVARVIDSRKPR.

This sequence belongs to the LpxB family.

It carries out the reaction a lipid X + a UDP-2-N,3-O-bis[(3R)-3-hydroxyacyl]-alpha-D-glucosamine = a lipid A disaccharide + UDP + H(+). Its pathway is bacterial outer membrane biogenesis; LPS lipid A biosynthesis. In terms of biological role, condensation of UDP-2,3-diacylglucosamine and 2,3-diacylglucosamine-1-phosphate to form lipid A disaccharide, a precursor of lipid A, a phosphorylated glycolipid that anchors the lipopolysaccharide to the outer membrane of the cell. This chain is Lipid-A-disaccharide synthase, found in Burkholderia pseudomallei (strain 1710b).